Here is a 198-residue protein sequence, read N- to C-terminus: Interferon gamma (198 aa).

The N-terminal stretch at M1–G23 is a signal peptide. N-linked (GlcNAc...) asparagine glycans are attached at residues N31, N42, and N174. The disordered stretch occupies residues S173–A198. The span at M178–A198 shows a compositional bias: basic residues.

This sequence belongs to the type II (or gamma) interferon family. Homodimer.

It is found in the secreted. In terms of biological role, cytokine which binds to interferon gamma receptor 1 (ifngr1). Also binds with lower affinity to interferon gamma receptor 1-like (ifngr1l). Has activating effects on macrophages and neutrophils. The sequence is that of Interferon gamma from Paralichthys olivaceus (Bastard halibut).